A 183-amino-acid polypeptide reads, in one-letter code: 2-C-methyl-D-erythritol 2,4-cyclodiphosphate synthase (183 aa).

2 residues coordinate a divalent metal cation: D10 and H12. Residues 10–12 (DVH) and 38–39 (HS) contribute to the 4-CDP-2-C-methyl-D-erythritol 2-phosphate site. Position 46 (H46) interacts with a divalent metal cation. 4-CDP-2-C-methyl-D-erythritol 2-phosphate-binding positions include 60-62 (DIG) and 65-69 (FPDTD).

The protein belongs to the IspF family. In terms of assembly, homotrimer. The cofactor is a divalent metal cation.

It carries out the reaction 4-CDP-2-C-methyl-D-erythritol 2-phosphate = 2-C-methyl-D-erythritol 2,4-cyclic diphosphate + CMP. Its pathway is isoprenoid biosynthesis; isopentenyl diphosphate biosynthesis via DXP pathway; isopentenyl diphosphate from 1-deoxy-D-xylulose 5-phosphate: step 4/6. In terms of biological role, involved in the biosynthesis of isopentenyl diphosphate (IPP) and dimethylallyl diphosphate (DMAPP), two major building blocks of isoprenoid compounds. Catalyzes the conversion of 4-diphosphocytidyl-2-C-methyl-D-erythritol 2-phosphate (CDP-ME2P) to 2-C-methyl-D-erythritol 2,4-cyclodiphosphate (ME-CPP) with a corresponding release of cytidine 5-monophosphate (CMP). This Verminephrobacter eiseniae (strain EF01-2) protein is 2-C-methyl-D-erythritol 2,4-cyclodiphosphate synthase.